We begin with the raw amino-acid sequence, 161 residues long: Putative 4-hydroxy-4-methyl-2-oxoglutarate aldolase (161 aa).

Substrate is bound by residues 75–78 and R97; that span reads GDQL. D98 serves as a coordination point for a divalent metal cation.

This sequence belongs to the class II aldolase/RraA-like family. As to quaternary structure, homotrimer. Requires a divalent metal cation as cofactor.

It carries out the reaction 4-hydroxy-4-methyl-2-oxoglutarate = 2 pyruvate. The enzyme catalyses oxaloacetate + H(+) = pyruvate + CO2. In terms of biological role, catalyzes the aldol cleavage of 4-hydroxy-4-methyl-2-oxoglutarate (HMG) into 2 molecules of pyruvate. Also contains a secondary oxaloacetate (OAA) decarboxylase activity due to the common pyruvate enolate transition state formed following C-C bond cleavage in the retro-aldol and decarboxylation reactions. This Vibrio cholerae serotype O1 (strain ATCC 39315 / El Tor Inaba N16961) protein is Putative 4-hydroxy-4-methyl-2-oxoglutarate aldolase.